Reading from the N-terminus, the 38-residue chain is Large ribosomal subunit protein bL36 (38 aa).

It belongs to the bacterial ribosomal protein bL36 family.

This is Large ribosomal subunit protein bL36 from Bacteroides fragilis (strain ATCC 25285 / DSM 2151 / CCUG 4856 / JCM 11019 / LMG 10263 / NCTC 9343 / Onslow / VPI 2553 / EN-2).